The chain runs to 388 residues: Quinolone resistance protein NorA (388 aa).

Helical transmembrane passes span 5 to 25, 42 to 62, 69 to 89, 99 to 119, 129 to 149, 157 to 177, 201 to 221, 239 to 259, 269 to 289, 293 to 313, 331 to 351, and 355 to 375; these read IFVL…VIPV, LLVA…GTLA, LIIC…AVGH, VIGG…IADV, FGYM…IGGF, MPFY…VVLI, WKVF…LSAF, DISI…IYFF, LTFI…LVIA, WTIM…RPAI, LNST…GALF, and IEAP…IVLI.

This sequence belongs to the major facilitator superfamily. TCR/Tet family.

It localises to the cell membrane. Involved in quinolone resistance. May constitute a membrane-associated active efflux pump of hydrophilic quinolones. This Staphylococcus aureus (strain MRSA252) protein is Quinolone resistance protein NorA (norA).